A 405-amino-acid chain; its full sequence is Nuclear hormone receptor family member nhr-199 (405 aa).

Positions 20–111 (IPYCLICSEV…MGMQRSSVQQ (92 aa)) form a DNA-binding region, nuclear receptor. 2 consecutive NR C4-type zinc fingers follow at residues 23–44 (CLIC…CRAC) and 60–94 (CGRN…CKAC). The NR LBD domain occupies 126-376 (RGKPVLNKLR…PFSRIHGNQK (251 aa)).

Belongs to the nuclear hormone receptor family.

It localises to the nucleus. Functionally, orphan nuclear receptor. This is Nuclear hormone receptor family member nhr-199 (nhr-199) from Caenorhabditis elegans.